Here is a 750-residue protein sequence, read N- to C-terminus: Photosystem I P700 chlorophyll a apoprotein A1 (750 aa).

Transmembrane regions (helical) follow at residues 70–93, 156–179, 195–219, 291–309, 346–369, 385–411, 433–455, and 531–549; these read VFSA…FHGA, LYCT…FHYH, LNHH…HVSL, IAHH…GHMY, WHAQ…HHMY, LSLF…IFMV, AIIS…LYIH, and FLVH…LILL. The [4Fe-4S] cluster site is built by cysteine 573 and cysteine 582. The next 2 helical transmembrane spans lie at 589–610 and 664–686; these read HVFL…HFSW and LSAY…MFLF. Histidine 675 provides a ligand contact to chlorophyll a'. 2 residues coordinate chlorophyll a: methionine 683 and tyrosine 691. Tryptophan 692 is a binding site for phylloquinone. A helical transmembrane segment spans residues 724–744; it reads AVGVTHYLLGGIATTWAFFLA.

It belongs to the PsaA/PsaB family. In terms of assembly, the PsaA/B heterodimer binds the P700 chlorophyll special pair and subsequent electron acceptors. PSI consists of a core antenna complex that captures photons, and an electron transfer chain that converts photonic excitation into a charge separation. The eukaryotic PSI reaction center is composed of at least 11 subunits. P700 is a chlorophyll a/chlorophyll a' dimer, A0 is one or more chlorophyll a, A1 is one or both phylloquinones and FX is a shared 4Fe-4S iron-sulfur center. serves as cofactor.

The protein resides in the plastid. The protein localises to the chloroplast thylakoid membrane. It carries out the reaction reduced [plastocyanin] + hnu + oxidized [2Fe-2S]-[ferredoxin] = oxidized [plastocyanin] + reduced [2Fe-2S]-[ferredoxin]. PsaA and PsaB bind P700, the primary electron donor of photosystem I (PSI), as well as the electron acceptors A0, A1 and FX. PSI is a plastocyanin-ferredoxin oxidoreductase, converting photonic excitation into a charge separation, which transfers an electron from the donor P700 chlorophyll pair to the spectroscopically characterized acceptors A0, A1, FX, FA and FB in turn. Oxidized P700 is reduced on the lumenal side of the thylakoid membrane by plastocyanin. The polypeptide is Photosystem I P700 chlorophyll a apoprotein A1 (Liriodendron tulipifera (Tuliptree)).